A 648-amino-acid chain; its full sequence is Macrolide export ATP-binding/permease protein MacB (648 aa).

Positions leucine 5 to threonine 243 constitute an ABC transporter domain. ATP is bound at residue glycine 41–serine 48. The next 5 helical transmembrane spans lie at leucine 273–glycine 293, alanine 417–alanine 437, leucine 523–isoleucine 543, valine 577–methionine 597, and leucine 611–leucine 631.

The protein belongs to the ABC transporter superfamily. Macrolide exporter (TC 3.A.1.122) family. As to quaternary structure, homodimer. Part of the tripartite efflux system MacAB-TolC, which is composed of an inner membrane transporter, MacB, a periplasmic membrane fusion protein, MacA, and an outer membrane component, TolC. The complex forms a large protein conduit and can translocate molecules across both the inner and outer membranes. Interacts with MacA.

The protein resides in the cell inner membrane. In terms of biological role, part of the tripartite efflux system MacAB-TolC. MacB is a non-canonical ABC transporter that contains transmembrane domains (TMD), which form a pore in the inner membrane, and an ATP-binding domain (NBD), which is responsible for energy generation. Confers resistance against macrolides. The chain is Macrolide export ATP-binding/permease protein MacB from Salmonella typhi.